The chain runs to 297 residues: Manganese efflux system protein MneP (297 aa).

Transmembrane regions (helical) follow at residues 12–32 (VALIALIANLILMAGKVFFGL), 43–63 (GIHSAADVVASIAVLAVIGIS), 85–105 (IVGIILVIVSVYILIEAILSF), 111–131 (VPQYSALFAALISYVAKEILY), 155–175 (GDIVASLAAFIGVLLAIIGNS), and 177–197 (GWSYLLYADAIASAIVAYLIF).

This sequence belongs to the cation diffusion facilitator (CDF) transporter (TC 2.A.4) family.

The protein localises to the cell membrane. Its function is as follows. Primary efflux pump for manganese. May prevent manganese intoxication. The protein is Manganese efflux system protein MneP of Bacillus subtilis (strain 168).